Consider the following 211-residue polypeptide: Thiamine-phosphate synthase (211 aa).

Residues 41-45 (QYRDK) and Asn73 each bind 4-amino-2-methyl-5-(diphosphooxymethyl)pyrimidine. Asp74 and Asp93 together coordinate Mg(2+). Residue Thr112 participates in 4-amino-2-methyl-5-(diphosphooxymethyl)pyrimidine binding. 139 to 141 (SPT) is a binding site for 2-[(2R,5Z)-2-carboxy-4-methylthiazol-5(2H)-ylidene]ethyl phosphate. A 4-amino-2-methyl-5-(diphosphooxymethyl)pyrimidine-binding site is contributed by Lys142. Residues Gly169 and 189 to 190 (VS) each bind 2-[(2R,5Z)-2-carboxy-4-methylthiazol-5(2H)-ylidene]ethyl phosphate.

This sequence belongs to the thiamine-phosphate synthase family. Mg(2+) serves as cofactor.

It carries out the reaction 2-[(2R,5Z)-2-carboxy-4-methylthiazol-5(2H)-ylidene]ethyl phosphate + 4-amino-2-methyl-5-(diphosphooxymethyl)pyrimidine + 2 H(+) = thiamine phosphate + CO2 + diphosphate. It catalyses the reaction 2-(2-carboxy-4-methylthiazol-5-yl)ethyl phosphate + 4-amino-2-methyl-5-(diphosphooxymethyl)pyrimidine + 2 H(+) = thiamine phosphate + CO2 + diphosphate. The enzyme catalyses 4-methyl-5-(2-phosphooxyethyl)-thiazole + 4-amino-2-methyl-5-(diphosphooxymethyl)pyrimidine + H(+) = thiamine phosphate + diphosphate. Its pathway is cofactor biosynthesis; thiamine diphosphate biosynthesis; thiamine phosphate from 4-amino-2-methyl-5-diphosphomethylpyrimidine and 4-methyl-5-(2-phosphoethyl)-thiazole: step 1/1. Functionally, condenses 4-methyl-5-(beta-hydroxyethyl)thiazole monophosphate (THZ-P) and 2-methyl-4-amino-5-hydroxymethyl pyrimidine pyrophosphate (HMP-PP) to form thiamine monophosphate (TMP). The polypeptide is Thiamine-phosphate synthase (Thioalkalivibrio sulfidiphilus (strain HL-EbGR7)).